A 350-amino-acid chain; its full sequence is tRNA uridine(34) hydroxylase (350 aa).

The Rhodanese domain occupies 146-240 (DDPDAVFIDM…YARKAREQGL (95 aa)). The active-site Cysteine persulfide intermediate is C200. The segment at 314 to 350 (PEEEQRRRRAGRENGNKIFNKSRGRLNTQLGIPDPAE) is disordered. Over residues 316–328 (EEQRRRRAGRENG) the composition is skewed to basic and acidic residues.

This sequence belongs to the TrhO family.

It catalyses the reaction uridine(34) in tRNA + AH2 + O2 = 5-hydroxyuridine(34) in tRNA + A + H2O. Functionally, catalyzes oxygen-dependent 5-hydroxyuridine (ho5U) modification at position 34 in tRNAs. This chain is tRNA uridine(34) hydroxylase, found in Citrobacter koseri (strain ATCC BAA-895 / CDC 4225-83 / SGSC4696).